The following is a 116-amino-acid chain: MEGYQRPCDEVGFNADEAHNIVKECVDGVLGGNDYNENNINQWTASIVEQSITHLVKLGKAYKYIVTCAVVQRSPYGFHTASSCFWDTTSDGTCTIRWENRTMNCIVNVFAVAIVL.

Tyrosine 4 is subject to 3'-nitrotyrosine.

This sequence belongs to the dynein light chain Tctex-type family. Homodimer. The cytoplasmic dynein 1 complex consists of two catalytic heavy chains (HCs) and a number of non-catalytic subunits presented by intermediate chains (ICs), light intermediate chains (LICs) and light chains (LCs); the composition seems to vary in respect to the IC, LIC and LC composition. The heavy chain homodimer serves as a scaffold for the probable homodimeric assembly of the respective non-catalytic subunits. The ICs and LICs bind directly to the HC dimer and the LCs assemble on the IC dimer. DYNLT1 and DYNLT3 compete for association with dynein IC (DYNC1I1 or DYNC1I2). Self-associates. Interacts with DYNC1I1 and DYNC1I2. Interacts with BUB3. Interacts with SATB1 in nucleus to form complex with matrix attachment regions (MARs) of DNA.

It localises to the nucleus. The protein localises to the cytoplasm. It is found in the cytoskeleton. Its subcellular location is the chromosome. The protein resides in the centromere. It localises to the kinetochore. Functionally, acts as one of several non-catalytic accessory components of the cytoplasmic dynein 1 complex that are thought to be involved in linking dynein to cargos and to adapter proteins that regulate dynein function. Cytoplasmic dynein 1 acts as a motor for the intracellular retrograde motility of vesicles and organelles along microtubules. Probably binds BUB3 as part of transport cargo. Required for the efficient progression through mitosis. The protein is Dynein light chain Tctex-type 3 (Dynlt3) of Mus musculus (Mouse).